A 318-amino-acid chain; its full sequence is Mitochondrial thiamine pyrophosphate carrier (318 aa).

Solcar repeat units lie at residues 13–106 (NSKL…LTEL), 116–202 (HQFS…LKRA), and 214–309 (TGNL…FCNL). The next 6 membrane-spanning stretches (helical) occupy residues 19–39 (AVAGSVSGFVTRALISPLDVI), 87–107 (ILSIGYGAVQFLAFEELTELL), 122–142 (FVCGGLSAGTATLTVHPVDVL), 173–193 (VFYKGLTPTVIAIFPYAGLQF), 220–240 (LLCGCGSGVISKTLTYPLDLF), and 293–313 (ALSTGFMFFWYELFCNLFHCI).

The protein belongs to the mitochondrial carrier (TC 2.A.29) family.

The protein localises to the mitochondrion membrane. The enzyme catalyses thiamine phosphate(out) + thiamine diphosphate(in) = thiamine phosphate(in) + thiamine diphosphate(out). Functionally, mitochondrial transporter mediating uptake of thiamine diphosphate into mitochondria. It is not clear if the antiporter activity is affected by the membrane potential or by the proton electrochemical gradient. The chain is Mitochondrial thiamine pyrophosphate carrier (Slc25a19) from Rattus norvegicus (Rat).